The following is a 273-amino-acid chain: Ribosomal RNA small subunit methyltransferase A (273 aa).

S-adenosyl-L-methionine is bound by residues Asn23, Ile25, Gly50, Glu72, Asp97, and Asn116.

It belongs to the class I-like SAM-binding methyltransferase superfamily. rRNA adenine N(6)-methyltransferase family. RsmA subfamily.

The protein resides in the cytoplasm. It catalyses the reaction adenosine(1518)/adenosine(1519) in 16S rRNA + 4 S-adenosyl-L-methionine = N(6)-dimethyladenosine(1518)/N(6)-dimethyladenosine(1519) in 16S rRNA + 4 S-adenosyl-L-homocysteine + 4 H(+). Specifically dimethylates two adjacent adenosines (A1518 and A1519) in the loop of a conserved hairpin near the 3'-end of 16S rRNA in the 30S particle. May play a critical role in biogenesis of 30S subunits. The chain is Ribosomal RNA small subunit methyltransferase A from Rickettsia akari (strain Hartford).